The chain runs to 66 residues: Large ribosomal subunit protein uL29 (66 aa).

Belongs to the universal ribosomal protein uL29 family.

The polypeptide is Large ribosomal subunit protein uL29 (Lachnospira eligens (strain ATCC 27750 / DSM 3376 / VPI C15-48 / C15-B4) (Eubacterium eligens)).